A 151-amino-acid chain; its full sequence is Small ribosomal subunit protein uS19 (151 aa).

It belongs to the universal ribosomal protein uS19 family.

Protein S19 forms a complex with S13 that binds strongly to the 16S ribosomal RNA. In Thermoplasma acidophilum (strain ATCC 25905 / DSM 1728 / JCM 9062 / NBRC 15155 / AMRC-C165), this protein is Small ribosomal subunit protein uS19 (rps19).